A 98-amino-acid polypeptide reads, in one-letter code: ORF9b protein (98 aa).

The region spanning V9–K98 is the 9b domain. Residues I46–S54 carry the Nuclear export signal motif.

This sequence belongs to the coronavirus group 2 protein 9b family. Homodimer. Interacts with host XPO1; this interaction mediates protein ORF9b export out of the nucleus. Interacts with host MAVS. Interacts with protein ORF6.

Its subcellular location is the virion. It localises to the host cytoplasmic vesicle membrane. The protein resides in the host cytoplasm. The protein localises to the host endoplasmic reticulum. It is found in the host nucleus. Its subcellular location is the host mitochondrion. In terms of biological role, plays a role in the inhibition of host innate immune response by targeting the mitochondrial-associated adapter MAVS. Mechanistically, usurps the E3 ligase ITCH to trigger the degradation of MAVS, TRAF3, and TRAF6. In addition, causes mitochondrial elongation by triggering ubiquitination and proteasomal degradation of dynamin-like protein 1/DNM1L. The sequence is that of ORF9b protein from Homo sapiens (Human).